The sequence spans 193 residues: Large ribosomal subunit protein uL5 (193 aa).

This sequence belongs to the universal ribosomal protein uL5 family. Part of the 50S ribosomal subunit; part of the 5S rRNA/L5/L18/L25 subcomplex. Contacts the 5S rRNA and the P site tRNA. Forms a bridge to the 30S subunit in the 70S ribosome.

Its function is as follows. This is one of the proteins that bind and probably mediate the attachment of the 5S RNA into the large ribosomal subunit, where it forms part of the central protuberance. In the 70S ribosome it contacts protein S13 of the 30S subunit (bridge B1b), connecting the 2 subunits; this bridge is implicated in subunit movement. Contacts the P site tRNA; the 5S rRNA and some of its associated proteins might help stabilize positioning of ribosome-bound tRNAs. The protein is Large ribosomal subunit protein uL5 of Arthrobacter sp. (strain FB24).